The chain runs to 119 residues: Large ribosomal subunit protein bL20 (119 aa).

This sequence belongs to the bacterial ribosomal protein bL20 family.

Functionally, binds directly to 23S ribosomal RNA and is necessary for the in vitro assembly process of the 50S ribosomal subunit. It is not involved in the protein synthesizing functions of that subunit. The polypeptide is Large ribosomal subunit protein bL20 (Sorangium cellulosum (strain So ce56) (Polyangium cellulosum (strain So ce56))).